Consider the following 120-residue polypeptide: Large ribosomal subunit protein bL12 (120 aa).

Belongs to the bacterial ribosomal protein bL12 family. Homodimer. Part of the ribosomal stalk of the 50S ribosomal subunit. Forms a multimeric L10(L12)X complex, where L10 forms an elongated spine to which 2 to 4 L12 dimers bind in a sequential fashion. Binds GTP-bound translation factors.

In terms of biological role, forms part of the ribosomal stalk which helps the ribosome interact with GTP-bound translation factors. Is thus essential for accurate translation. This is Large ribosomal subunit protein bL12 from Listeria monocytogenes serotype 4b (strain CLIP80459).